The primary structure comprises 321 residues: Opticin (321 aa).

The first 19 residues, 1–19 (MKLLALLSLLILMLQEART), serve as a signal peptide directing secretion. Tyr-61 bears the Sulfotyrosine mark. The LRRNT domain maps to 105 to 142 (LLAAPANHGLPTCLICVCLGSSVYCDDADLENIPPLPQ). 6 LRR repeats span residues 143 to 164 (TTAY…DFKG), 167 to 188 (KLKR…ALRL), 191 to 212 (ALRD…PTSI), 237 to 258 (KLQF…LPLS), 259 to 279 (LRSL…AFCD), and 289 to 309 (PLED…PSAY). A disulfide bond links Cys-278 and Cys-311. Residue Asn-301 is glycosylated (N-linked (GlcNAc...) asparagine).

It belongs to the small leucine-rich proteoglycan (SLRP) family. SLRP class III subfamily. Homodimer. In terms of processing, O-glycosylated (sialylated oligosaccharides). Sulfated on tyrosine residues. Post-translationally, proteolytically cleaved by MMP1, MMP2, MMP3, MMP7, MMP8, MMP9, ADAMTS4, and ADAMTS5. Proteolytically cleaved by MMP13.

The protein resides in the secreted. It is found in the extracellular space. The protein localises to the extracellular matrix. Functionally, inhibits angiogenesis in the vitreous humor of the eye, and therefore represses neovascularization. Binds collagen fibrils. May be involved in collagen fiber organization via regulation of other members of the small leucine-rich repeat proteoglycan superfamily. The chain is Opticin (OPTC) from Bos taurus (Bovine).